The chain runs to 471 residues: Metal tolerance protein C1 (471 aa).

Residues 1-78 (MGIIRFQILN…PGEEGEKIFR (78 aa)) are Cytoplasmic-facing. A helical transmembrane segment spans residues 79-99 (LGLTADIGLSVAKALTGYLCG). Topologically, residues 100–101 (ST) are vacuolar. A helical transmembrane segment spans residues 102–122 (AIIADAAHSVSDVVLSGVALV). Over 123-144 (SYRAANVPKDKEHPYGHGKFET) the chain is Cytoplasmic. A helical membrane pass occupies residues 145–165 (LGALGISAMLLATGSGIAWHA). At 166-192 (LDLLSIALSAAPEVIHSGHHHGIDMNH) the chain is on the vacuolar side. A helical transmembrane segment spans residues 193–213 (PILALTVTIASISIKEGLYWI). The Cytoplasmic portion of the chain corresponds to 214-236 (TKRAGEKQGSGLMMANAWHHRSD). The helical transmembrane segment at 237 to 257 (AISSLVALVGVGGSILGVNFL) threads the bilayer. Over 258 to 423 (DPLAGLVVST…RITPHLLHSK (166 aa)) the chain is Vacuolar. The chain crosses the membrane as a helical span at residues 424–444 (ILLQIVVAMPSTMSIQDVMIA). Over 445–471 (AEHAEKEILKAAPNVARVSIQLSLNSE) the chain is Cytoplasmic.

It belongs to the cation diffusion facilitator (CDF) transporter (TC 2.A.4) family.

The protein resides in the vacuole membrane. In terms of biological role, involved in sequestration of excess metal in the cytoplasm into vacuoles to maintain metal homeostasis. The protein is Metal tolerance protein C1 (MTPC1) of Arabidopsis thaliana (Mouse-ear cress).